Reading from the N-terminus, the 559-residue chain is Cytochrome P450 86B1 (559 aa).

Residues 31 to 51 (FLLRDVQILELLIAIFVFVAI) traverse the membrane as a helical segment. A heme-binding site is contributed by Cys488.

It belongs to the cytochrome P450 family. It depends on heme as a cofactor. Expressed in roots endodermis, anthers, stigmas, stomata of young pedicels of inflorescences, the placenta region of siliques, at the level of the hilum in matures seeds, at the junction of siliques to pedicels where abscission of floral parts takes place and in nectary glands.

The protein localises to the endoplasmic reticulum membrane. Its function is as follows. Involved in very long chain fatty acids (VLCFA) omega-hydroxylation. Required for the synthesis of saturated VLCFA alpha, omega-bifunctional suberin monomers. This chain is Cytochrome P450 86B1 (CYP86B1), found in Arabidopsis thaliana (Mouse-ear cress).